A 110-amino-acid polypeptide reads, in one-letter code: UPF0213 protein DP2720 (110 aa).

The 77-residue stretch at Pro-12–Thr-88 folds into the GIY-YIG domain.

The protein belongs to the UPF0213 family.

This Desulfotalea psychrophila (strain LSv54 / DSM 12343) protein is UPF0213 protein DP2720.